We begin with the raw amino-acid sequence, 455 residues long: Keratin, type I cuticular Ha5 (455 aa).

Residues 1 to 97 (MASKCLKAGF…FGEGILTGNE (97 aa)) form a head region. The IF rod domain maps to 97 to 408 (EKETMQSLND…GLLESEDSKL (312 aa)). The segment at 98-132 (KETMQSLNDRLAGYLEKVRQLEQENASLESRIREW) is coil 1A. The segment at 133–143 (CEQQVPYMCPD) is linker 1. The tract at residues 144–244 (YQSYFRTIEE…HEEEVNSLRC (101 aa)) is coil 1B. The segment at 245-260 (QLGDRLNVEVDAAPPV) is linker 12. A coil 2 region spans residues 261 to 404 (DLNRVLEEMR…NTYRGLLESE (144 aa)). Positions 405–455 (DSKLPCNPCAPDYSPSKSCLPCLPAASCGPSAARTNCSPRPICVPCPGGRF) are tail.

This sequence belongs to the intermediate filament family. As to expression, early expression in the hair follicle, mainly found in supramatricial cells and lowermost cortical cells of the hair bulb.

The polypeptide is Keratin, type I cuticular Ha5 (KRT35) (Homo sapiens (Human)).